A 236-amino-acid chain; its full sequence is Small ribosomal subunit protein uS2c (236 aa).

Belongs to the universal ribosomal protein uS2 family.

The protein resides in the plastid. The chain is Small ribosomal subunit protein uS2c (rps2) from Cuscuta exaltata (Tall dodder).